We begin with the raw amino-acid sequence, 232 residues long: Rho-related GTP-binding protein Rho6 (232 aa).

GTP is bound by residues 23–28 (QCGKTA), 38–45 (YPETYVPT), 67–71 (DTSGS), 125–128 (CKTD), and 169–170 (AF). The Effector region signature appears at 42 to 50 (YVPTVFENY). C229 is modified (cysteine methyl ester). C229 carries S-geranylgeranyl cysteine lipidation. A propeptide spans 230–232 (SIM) (removed in mature form).

It belongs to the small GTPase superfamily. Rho family. In terms of assembly, binds GRB7 and PLXNB1. Interacts with PLXNA2. Interacts with UBXD5.

The protein resides in the cell membrane. The protein localises to the cytoplasm. Its subcellular location is the cytoskeleton. In terms of biological role, lacks intrinsic GTPase activity. Has a low affinity for GDP, and constitutively binds GTP. Controls rearrangements of the actin cytoskeleton. Induces the Rac-dependent neuritic process formation in part by disruption of the cortical actin filaments. Causes the formation of many neuritic processes from the cell body with disruption of the cortical actin filaments. This is Rho-related GTP-binding protein Rho6 (RND1) from Bos taurus (Bovine).